The following is a 908-amino-acid chain: E3 ubiquitin-protein ligase ZNF598 (908 aa).

Residues Cys27 to Arg67 form an RING-type zinc finger. Residues Pro185 to His208 form a C2H2-type zinc finger. 5 disordered regions span residues Ser292–Glu338, Ser350–Phe441, Pro467–Gly557, Ser569–Pro619, and Pro719–Leu744. Phosphoserine is present on Ser295. A Phosphotyrosine modification is found at Tyr304. Positions Gln313–Arg329 are enriched in low complexity. Residues Glu358–Arg385 show a composition bias toward basic and acidic residues. Residue Ser433 is modified to Phosphoserine. Positions Pro482–Ala501 are enriched in low complexity. Residues Lys529 to Arg538 are compositionally biased toward basic residues.

Belongs to the ZNF598/HEL2 family. Interacts with the E2 ubiquitin-conjugating enzyme UBE2D3. Component of the 4EHP-GYF2 complex, at least composed of EIF4E2, GIGYF2 and ZNF598.

It is found in the cytoplasm. Its subcellular location is the cytosol. It carries out the reaction S-ubiquitinyl-[E2 ubiquitin-conjugating enzyme]-L-cysteine + [acceptor protein]-L-lysine = [E2 ubiquitin-conjugating enzyme]-L-cysteine + N(6)-ubiquitinyl-[acceptor protein]-L-lysine.. The protein operates within protein modification; protein ubiquitination. Its function is as follows. E3 ubiquitin-protein ligase that plays a key role in the ribosome quality control (RQC), a pathway that takes place when a ribosome has stalled during translation, leading to degradation of nascent peptide chains. ZNF598 is activated when ribosomes are stalled within an mRNA following translation of prematurely polyadenylated mRNAs. Acts as a ribosome collision sensor: specifically recognizes and binds collided di-ribosome, which arises when a trailing ribosome encounters a slower leading ribosome, leading to terminally arrest translation. Following binding to colliding ribosomes, mediates monoubiquitination of 40S ribosomal proteins RPS10/eS10 and RPS3/uS3, and 'Lys-63'-linked polyubiquitination of RPS20/uS10. Polyubiquitination of RPS20/uS10 promotes recruitment of the RQT (ribosome quality control trigger) complex, which drives the disassembly of stalled ribosomes, followed by degradation of nascent peptides. E3 ubiquitin-protein ligase activity is dependent on the E2 ubiquitin-conjugating enzyme UBE2D3. Also acts as an adapter that recruits the 4EHP-GYF2 complex to mRNAs. Independently of its role in RQC, may also act as a negative regulator of interferon-stimulated gene (ISG) expression. The sequence is that of E3 ubiquitin-protein ligase ZNF598 from Mus musculus (Mouse).